We begin with the raw amino-acid sequence, 282 residues long: Acetyl-coenzyme A carboxylase carboxyl transferase subunit beta (282 aa).

The CoA carboxyltransferase N-terminal domain maps to 29–282 (LWRTCPKCQR…LMKYGGKQND (254 aa)). 4 residues coordinate Zn(2+): Cys33, Cys36, Cys51, and Cys54. The segment at 33-54 (CPKCQRTLFAAQMDEYATCPGC) adopts a C4-type zinc-finger fold.

It belongs to the AccD/PCCB family. Acetyl-CoA carboxylase is a heterohexamer composed of biotin carboxyl carrier protein (AccB), biotin carboxylase (AccC) and two subunits each of ACCase subunit alpha (AccA) and ACCase subunit beta (AccD). The cofactor is Zn(2+).

The protein localises to the cytoplasm. It catalyses the reaction N(6)-carboxybiotinyl-L-lysyl-[protein] + acetyl-CoA = N(6)-biotinyl-L-lysyl-[protein] + malonyl-CoA. The protein operates within lipid metabolism; malonyl-CoA biosynthesis; malonyl-CoA from acetyl-CoA: step 1/1. Component of the acetyl coenzyme A carboxylase (ACC) complex. Biotin carboxylase (BC) catalyzes the carboxylation of biotin on its carrier protein (BCCP) and then the CO(2) group is transferred by the transcarboxylase to acetyl-CoA to form malonyl-CoA. This is Acetyl-coenzyme A carboxylase carboxyl transferase subunit beta from Limosilactobacillus fermentum (strain NBRC 3956 / LMG 18251) (Lactobacillus fermentum).